A 227-amino-acid polypeptide reads, in one-letter code: MESFETLEKLLSYSFKNKELLIEALSHPSLRQHHEYKDDKDYERLEFLGDAVLNLVITEILFRNFANYNEGHLAKIRSYLVCKETICMVGAKLTLKNYIIMTHGEEVAGGRDNLNNIENATEALIAAIYLDSNIETTYDIIEKLWAEFIKVQNLTDYDPKTALQEWAQASDHHLPIYRLIKREGASHSSTFTVLVKVKDYEQTGTGHAIKEAEKNAARSLLHRLKND.

In terms of domain architecture, RNase III spans F4 to N133. E46 lines the Mg(2+) pocket. D50 is a catalytic residue. N119 and E122 together coordinate Mg(2+). E122 is a catalytic residue. Positions D158 to N226 constitute a DRBM domain.

Belongs to the ribonuclease III family. In terms of assembly, homodimer. Mg(2+) serves as cofactor.

Its subcellular location is the cytoplasm. The enzyme catalyses Endonucleolytic cleavage to 5'-phosphomonoester.. Functionally, digests double-stranded RNA. Involved in the processing of primary rRNA transcript to yield the immediate precursors to the large and small rRNAs (23S and 16S). Processes some mRNAs, and tRNAs when they are encoded in the rRNA operon. Processes pre-crRNA and tracrRNA of type II CRISPR loci if present in the organism. The protein is Ribonuclease 3 of Rickettsia massiliae (strain Mtu5).